Reading from the N-terminus, the 249-residue chain is Exosome complex component Rrp41 (249 aa).

Belongs to the RNase PH family. Rrp41 subfamily. Component of the archaeal exosome complex. Forms a hexameric ring-like arrangement composed of 3 Rrp41-Rrp42 heterodimers. The hexameric ring associates with a trimer of Rrp4 and/or Csl4 subunits.

It is found in the cytoplasm. Its function is as follows. Catalytic component of the exosome, which is a complex involved in RNA degradation. Has 3'-&gt;5' exoribonuclease activity. Can also synthesize heteromeric RNA-tails. The chain is Exosome complex component Rrp41 from Thermococcus kodakarensis (strain ATCC BAA-918 / JCM 12380 / KOD1) (Pyrococcus kodakaraensis (strain KOD1)).